The primary structure comprises 138 residues: Phospholipase A2 EC3 (138 aa).

A signal peptide spans 1 to 16; the sequence is MRTLWIVAVWLMGVEG. 7 disulfides stabilise this stretch: cysteine 42–cysteine 131, cysteine 44–cysteine 60, cysteine 59–cysteine 111, cysteine 65–cysteine 138, cysteine 66–cysteine 104, cysteine 73–cysteine 97, and cysteine 91–cysteine 102. Ca(2+) contacts are provided by tyrosine 43, glycine 45, and glycine 47. The active site involves histidine 63. Aspartate 64 provides a ligand contact to Ca(2+). The active site involves aspartate 105.

The protein belongs to the phospholipase A2 family. Group II subfamily. Requires Ca(2+) as cofactor.

It is found in the secreted. It catalyses the reaction a 1,2-diacyl-sn-glycero-3-phosphocholine + H2O = a 1-acyl-sn-glycero-3-phosphocholine + a fatty acid + H(+). PA2 catalyzes the calcium-dependent hydrolysis of the 2-acyl groups in 3-sn-phosphoglycerides. This Echis coloratus (Carpet viper) protein is Phospholipase A2 EC3.